The sequence spans 248 residues: Proteasome subunit alpha type-3 (248 aa).

Belongs to the peptidase T1A family. The 26S proteasome consists of a 20S proteasome core and two 19S regulatory subunits. The 20S proteasome core is composed of 28 subunits that are arranged in four stacked rings, resulting in a barrel-shaped structure. The two end rings are each formed by seven alpha subunits, and the two central rings are each formed by seven beta subunits. The catalytic chamber with the active sites is on the inside of the barrel.

It is found in the cytoplasm. The protein resides in the nucleus. Functionally, the proteasome is a multicatalytic proteinase complex which is characterized by its ability to cleave peptides with Arg, Phe, Tyr, Leu, and Glu adjacent to the leaving group at neutral or slightly basic pH. The proteasome has an ATP-dependent proteolytic activity. The protein is Proteasome subunit alpha type-3 (psmA3) of Dictyostelium discoideum (Social amoeba).